A 433-amino-acid polypeptide reads, in one-letter code: UDP-N-acetylglucosamine 1-carboxyvinyltransferase (433 aa).

22 to 23 (KN) is a binding site for phosphoenolpyruvate. Arginine 96 contributes to the UDP-N-acetyl-alpha-D-glucosamine binding site. Cysteine 120 acts as the Proton donor in catalysis. Position 120 is a 2-(S-cysteinyl)pyruvic acid O-phosphothioketal (cysteine 120). Residues 125–129 (RPIDL), aspartate 308, and isoleucine 330 contribute to the UDP-N-acetyl-alpha-D-glucosamine site.

The protein belongs to the EPSP synthase family. MurA subfamily.

It is found in the cytoplasm. It catalyses the reaction phosphoenolpyruvate + UDP-N-acetyl-alpha-D-glucosamine = UDP-N-acetyl-3-O-(1-carboxyvinyl)-alpha-D-glucosamine + phosphate. Its pathway is cell wall biogenesis; peptidoglycan biosynthesis. Its function is as follows. Cell wall formation. Adds enolpyruvyl to UDP-N-acetylglucosamine. This is UDP-N-acetylglucosamine 1-carboxyvinyltransferase from Koribacter versatilis (strain Ellin345).